The chain runs to 334 residues: GTPase Obg (334 aa).

Residues 1-159 form the Obg domain; it reads MKFVDSASVR…REIGLELSVM (159 aa). The region spanning 160–332 is the OBG-type G domain; it reads ADIGLLGIPN…LVAGLFKLVL (173 aa). GTP-binding positions include 166 to 173, 191 to 195, 212 to 215, 282 to 285, and 313 to 315; these read GIPNAGKS, FTTLH, DIPG, NKID, and SAL. Mg(2+) is bound by residues serine 173 and threonine 193.

This sequence belongs to the TRAFAC class OBG-HflX-like GTPase superfamily. OBG GTPase family. In terms of assembly, monomer. Requires Mg(2+) as cofactor.

It is found in the cytoplasm. Its function is as follows. An essential GTPase which binds GTP, GDP and possibly (p)ppGpp with moderate affinity, with high nucleotide exchange rates and a fairly low GTP hydrolysis rate. Plays a role in control of the cell cycle, stress response, ribosome biogenesis and in those bacteria that undergo differentiation, in morphogenesis control. This is GTPase Obg from Vesicomyosocius okutanii subsp. Calyptogena okutanii (strain HA).